We begin with the raw amino-acid sequence, 326 residues long: 4-hydroxy-3-methylbut-2-enyl diphosphate reductase (326 aa).

Cys22 is a [4Fe-4S] cluster binding site. His51 and His84 together coordinate (2E)-4-hydroxy-3-methylbut-2-enyl diphosphate. Dimethylallyl diphosphate is bound by residues His51 and His84. Residues His51 and His84 each coordinate isopentenyl diphosphate. Cys106 serves as a coordination point for [4Fe-4S] cluster. His134 serves as a coordination point for (2E)-4-hydroxy-3-methylbut-2-enyl diphosphate. Dimethylallyl diphosphate is bound at residue His134. Isopentenyl diphosphate is bound at residue His134. Glu136 (proton donor) is an active-site residue. Residue Thr174 participates in (2E)-4-hydroxy-3-methylbut-2-enyl diphosphate binding. Residue Cys204 participates in [4Fe-4S] cluster binding. Residues Ser232, Ser233, Asn234, and Ser276 each contribute to the (2E)-4-hydroxy-3-methylbut-2-enyl diphosphate site. Residues Ser232, Ser233, Asn234, and Ser276 each contribute to the dimethylallyl diphosphate site. The isopentenyl diphosphate site is built by Ser232, Ser233, Asn234, and Ser276.

Belongs to the IspH family. Requires [4Fe-4S] cluster as cofactor.

The enzyme catalyses isopentenyl diphosphate + 2 oxidized [2Fe-2S]-[ferredoxin] + H2O = (2E)-4-hydroxy-3-methylbut-2-enyl diphosphate + 2 reduced [2Fe-2S]-[ferredoxin] + 2 H(+). It catalyses the reaction dimethylallyl diphosphate + 2 oxidized [2Fe-2S]-[ferredoxin] + H2O = (2E)-4-hydroxy-3-methylbut-2-enyl diphosphate + 2 reduced [2Fe-2S]-[ferredoxin] + 2 H(+). The protein operates within isoprenoid biosynthesis; dimethylallyl diphosphate biosynthesis; dimethylallyl diphosphate from (2E)-4-hydroxy-3-methylbutenyl diphosphate: step 1/1. It functions in the pathway isoprenoid biosynthesis; isopentenyl diphosphate biosynthesis via DXP pathway; isopentenyl diphosphate from 1-deoxy-D-xylulose 5-phosphate: step 6/6. Catalyzes the conversion of 1-hydroxy-2-methyl-2-(E)-butenyl 4-diphosphate (HMBPP) into a mixture of isopentenyl diphosphate (IPP) and dimethylallyl diphosphate (DMAPP). Acts in the terminal step of the DOXP/MEP pathway for isoprenoid precursor biosynthesis. The sequence is that of 4-hydroxy-3-methylbut-2-enyl diphosphate reductase from Bordetella bronchiseptica (strain ATCC BAA-588 / NCTC 13252 / RB50) (Alcaligenes bronchisepticus).